The following is a 116-amino-acid chain: Probable transcriptional regulator WhiB6 (116 aa).

Residues Cys-12, Cys-53, Cys-56, and Cys-62 each contribute to the [4Fe-4S] cluster site. Positions 33–86 (VCTQDPDRWTTTPDDEAKTLCRACPRRWLCARDAVESAGAEGLWAGVVIPESGR) constitute a 4Fe-4S Wbl-type domain.

It belongs to the WhiB family. It depends on [4Fe-4S] cluster as a cofactor. The Fe-S cluster can be nitrosylated by nitric oxide (NO). In terms of processing, upon Fe-S cluster removal intramolecular disulfide bonds are formed.

It is found in the cytoplasm. Its function is as follows. Acts as a transcriptional regulator. Probably redox-responsive. The apo- but not holo-form probably binds DNA. This is Probable transcriptional regulator WhiB6 (whiB6) from Mycobacterium tuberculosis (strain CDC 1551 / Oshkosh).